A 347-amino-acid chain; its full sequence is NADH-ubiquinone oxidoreductase chain 2 (347 aa).

The next 11 membrane-spanning stretches (helical) occupy residues 3-23, 25-45, 59-79, 96-116, 122-142, 149-169, 178-198, 201-221, 237-257, 274-294, and 326-346; these read PLIF…VMTT, HWVM…PILM, YFLT…INLT, IIMT…FWVP, VQLS…MSIL, INLD…GWGG, ILAY…VYNP, ALLN…MLMV, MPLL…LPPL, DSMI…YFYM, and LSPL…LALL.

Belongs to the complex I subunit 2 family. As to quaternary structure, core subunit of respiratory chain NADH dehydrogenase (Complex I) which is composed of 45 different subunits. Interacts with TMEM242.

It is found in the mitochondrion inner membrane. It carries out the reaction a ubiquinone + NADH + 5 H(+)(in) = a ubiquinol + NAD(+) + 4 H(+)(out). Its function is as follows. Core subunit of the mitochondrial membrane respiratory chain NADH dehydrogenase (Complex I) which catalyzes electron transfer from NADH through the respiratory chain, using ubiquinone as an electron acceptor. Essential for the catalytic activity and assembly of complex I. The sequence is that of NADH-ubiquinone oxidoreductase chain 2 from Nyctimene aello (Broad-striped tube-nosed fruit bat).